The primary structure comprises 493 residues: Acetyl-coenzyme A carboxylase carboxyl transferase subunit beta (493 aa).

In terms of domain architecture, CoA carboxyltransferase N-terminal spans 231–493; that stretch reads LWVQCENCYG…FKLHAFFPLN (263 aa). Cysteine 235, cysteine 238, cysteine 254, and cysteine 257 together coordinate Zn(2+). A C4-type zinc finger spans residues 235-257; it reads CENCYGLNYKKFLKSKINLCEQC.

It belongs to the AccD/PCCB family. Acetyl-CoA carboxylase is a heterohexamer composed of biotin carboxyl carrier protein, biotin carboxylase and 2 subunits each of ACCase subunit alpha and ACCase plastid-coded subunit beta (accD). Requires Zn(2+) as cofactor.

It is found in the plastid stroma. It catalyses the reaction N(6)-carboxybiotinyl-L-lysyl-[protein] + acetyl-CoA = N(6)-biotinyl-L-lysyl-[protein] + malonyl-CoA. Its pathway is lipid metabolism; malonyl-CoA biosynthesis; malonyl-CoA from acetyl-CoA: step 1/1. Functionally, component of the acetyl coenzyme A carboxylase (ACC) complex. Biotin carboxylase (BC) catalyzes the carboxylation of biotin on its carrier protein (BCCP) and then the CO(2) group is transferred by the transcarboxylase to acetyl-CoA to form malonyl-CoA. The protein is Acetyl-coenzyme A carboxylase carboxyl transferase subunit beta of Epifagus virginiana (Beechdrops).